We begin with the raw amino-acid sequence, 300 residues long: C-5 sterol desaturase (300 aa).

4 helical membrane passes run 3-23, 68-88, 91-111, and 147-167; these read DPVL…WTAA, SLAL…QLSA, WYTW…YHRI, and ILMW…FCSW. A Fatty acid hydroxylase domain is found at 94–227; it reads WVIAIVGVDL…LIIWDRLFGS (134 aa).

It belongs to the sterol desaturase family.

The protein localises to the cell membrane. The polypeptide is C-5 sterol desaturase (erg3) (Mycobacterium bovis (strain ATCC BAA-935 / AF2122/97)).